The primary structure comprises 154 residues: Superoxide dismutase [Cu-Zn] (154 aa).

H47, H49, and H64 together coordinate Cu cation. A disulfide bond links C58 and C147. Zn(2+) contacts are provided by H64, H72, H81, and D84. H121 lines the Cu cation pocket. R144 provides a ligand contact to substrate.

This sequence belongs to the Cu-Zn superoxide dismutase family. As to quaternary structure, homodimer. Cu cation serves as cofactor. Zn(2+) is required as a cofactor.

The protein localises to the cytoplasm. It carries out the reaction 2 superoxide + 2 H(+) = H2O2 + O2. In terms of biological role, destroys radicals which are normally produced within the cells and which are toxic to biological systems. This chain is Superoxide dismutase [Cu-Zn] (sodC), found in Aspergillus fumigatus (strain ATCC MYA-4609 / CBS 101355 / FGSC A1100 / Af293) (Neosartorya fumigata).